A 93-amino-acid polypeptide reads, in one-letter code: Aspartyl/glutamyl-tRNA(Asn/Gln) amidotransferase subunit C (93 aa).

It belongs to the GatC family. Heterotrimer of A, B and C subunits.

It carries out the reaction L-glutamyl-tRNA(Gln) + L-glutamine + ATP + H2O = L-glutaminyl-tRNA(Gln) + L-glutamate + ADP + phosphate + H(+). The catalysed reaction is L-aspartyl-tRNA(Asn) + L-glutamine + ATP + H2O = L-asparaginyl-tRNA(Asn) + L-glutamate + ADP + phosphate + 2 H(+). In terms of biological role, allows the formation of correctly charged Asn-tRNA(Asn) or Gln-tRNA(Gln) through the transamidation of misacylated Asp-tRNA(Asn) or Glu-tRNA(Gln) in organisms which lack either or both of asparaginyl-tRNA or glutaminyl-tRNA synthetases. The reaction takes place in the presence of glutamine and ATP through an activated phospho-Asp-tRNA(Asn) or phospho-Glu-tRNA(Gln). The chain is Aspartyl/glutamyl-tRNA(Asn/Gln) amidotransferase subunit C from Helicobacter pylori (strain HPAG1).